We begin with the raw amino-acid sequence, 622 residues long: Probable ATP-dependent RNA helicase DDX41 (622 aa).

Residues 1–15 (MEESEPERKRARTDE) show a composition bias toward basic and acidic residues. 2 disordered regions span residues 1–39 (MEESEPERKRARTDEVPAGGSRSEAEDEDDEDYVPYVPL) and 52–84 (QRRRKGAAEEEQQDSGSEPRGDEDDIPLGPQSN). Ser4 carries the post-translational modification Phosphoserine. Lys9 is subject to N6-acetyllysine. Residue Lys9 forms a Glycyl lysine isopeptide (Lys-Gly) (interchain with G-Cter in ubiquitin) linkage. Ser21 and Ser23 each carry phosphoserine. Tyr33 bears the Phosphotyrosine mark. A Glycyl lysine isopeptide (Lys-Gly) (interchain with G-Cter in ubiquitin) cross-link involves residue Lys115. Residues 181–209 (KSFKEMKFPAAILRGLKKKGIHHPTPIQI) carry the Q motif motif. In terms of domain architecture, Helicase ATP-binding spans 212-396 (IPTILSGRDM…KSALVKPVTI (185 aa)). ATP is bound at residue 225–232 (AFTGSGKT). A DEAD box motif is present at residues 344 to 347 (DEAD). The 161-residue stretch at 407-567 (DVIQEVEYVK…KVPPVLQVLH (161 aa)) folds into the Helicase C-terminal domain. Residue Tyr414 is modified to Phosphotyrosine; by BTK. Residues Lys416 and Lys442 each participate in a glycyl lysine isopeptide (Lys-Gly) (interchain with G-Cter in SUMO2) cross-link. A CCHC-type zinc finger spans residues 580–597 (RGCAFCGGLGHRITDCPK).

This sequence belongs to the DEAD box helicase family. DDX41 subfamily. As to quaternary structure, identified in the spliceosome C complex. Interacts with ERCC6. Interacts with FAM50A. Interacts with STING1. Interacts with CGAS. Interacts with several spliceosomes components such as PRP19 or CDC5L. Acetylation at Lys-9 regulates the nuclear/cytoplasmic localization. In terms of processing, phosphorylated by BTK; phosphorylation induces binding to dsDNA and STING1. Post-translationally, 'Lys-48'-linked ubiquitinated and degraded by TRIM21 leading to negative regulation of the innate immune response to intracellular dsDNA.

It is found in the nucleus. Its subcellular location is the cytoplasm. The enzyme catalyses ATP + H2O = ADP + phosphate + H(+). In terms of biological role, multifunctional protein that participates in many aspects of cellular RNA metabolism. Plays pivotal roles in innate immune sensing and hematopoietic homeostasis. Recognizes foreign or self-nucleic acids generated during microbial infection, thereby initiating anti-pathogen responses. Mechanistically, phosphorylation by BTK allows binding to dsDNA leading to interaction with STING1. Modulates the homeostasis of dsDNA through its ATP-dependent DNA-unwinding activity and ATP-independent strand-annealing activity. In turn, induces STING1-mediated type I interferon and cytokine responses to DNA and DNA viruses. Selectively modulates the transcription of certain immunity-associated genes by regulating their alternative splicing. Binds to RNA (R)-loops, structures consisting of DNA/RNA hybrids and a displaced strand of DNA that occur during transcription, and prevents their accumulation, thereby maintaining genome stability. Also participates in pre-mRNA splicing, translational regulation and snoRNA processing, which is essential for ribosome biogenesis. The sequence is that of Probable ATP-dependent RNA helicase DDX41 (DDX41) from Homo sapiens (Human).